The primary structure comprises 128 residues: Small ribosomal subunit protein eS6 (128 aa).

This sequence belongs to the eukaryotic ribosomal protein eS6 family.

This chain is Small ribosomal subunit protein eS6, found in Thermoplasma volcanium (strain ATCC 51530 / DSM 4299 / JCM 9571 / NBRC 15438 / GSS1).